A 335-amino-acid chain; its full sequence is MTTVLGIEGTAWNLSAAIVDEDDVIAEVTETYRPKTGGIHPREAAQHHALHASDVIERLLKEYRDKGHSPENIDAIAFSQGPGLGACLRTVATSARALALSLDIPLVGVNHCIGHVEIGRWKTPAVDPVVLYVSGGNSQVLAHRAGKYRIFGETLDIGIGNALDKFARGAGLTHPGGPKVEEYARKATNYVKMPYVVKGMDFSFSGLSTAATDALKDNSLEDVCYSFQENAFAMLVEVTERALAHTGKSEVLLAGGVGANMRLREMLDLMCEDRGASFYVPERRFMGDNGAMIAYTGLLMFNSGTTLPIENSHVDPSFRPDTVDVTWIADEKEVL.

Positions 111, 115, and 132 each coordinate Fe cation. Residues 132–136 (YVSGG), aspartate 164, glycine 177, glutamate 181, and asparagine 260 contribute to the substrate site. Position 288 (aspartate 288) interacts with Fe cation.

This sequence belongs to the KAE1 / TsaD family. As to quaternary structure, monomer. Component of the KEOPS complex that consists of Kae1, Bud32, Cgi121 and Pcc1; the whole complex dimerizes. Fe(2+) serves as cofactor.

It is found in the cytoplasm. It carries out the reaction L-threonylcarbamoyladenylate + adenosine(37) in tRNA = N(6)-L-threonylcarbamoyladenosine(37) in tRNA + AMP + H(+). In terms of biological role, required for the formation of a threonylcarbamoyl group on adenosine at position 37 (t(6)A37) in tRNAs that read codons beginning with adenine. Is a component of the KEOPS complex that is probably involved in the transfer of the threonylcarbamoyl moiety of threonylcarbamoyl-AMP (TC-AMP) to the N6 group of A37. Kae1 likely plays a direct catalytic role in this reaction, but requires other protein(s) of the complex to fulfill this activity. The sequence is that of tRNA N6-adenosine threonylcarbamoyltransferase from Methanococcoides burtonii (strain DSM 6242 / NBRC 107633 / OCM 468 / ACE-M).